A 147-amino-acid chain; its full sequence is uncharacterized protein (147 aa).

It to M.jannaschii MJ0215.

This is an uncharacterized protein from Methanocaldococcus jannaschii (strain ATCC 43067 / DSM 2661 / JAL-1 / JCM 10045 / NBRC 100440) (Methanococcus jannaschii).